We begin with the raw amino-acid sequence, 37 residues long: Large ribosomal subunit protein bL36 (37 aa).

The protein belongs to the bacterial ribosomal protein bL36 family.

The sequence is that of Large ribosomal subunit protein bL36 from Borreliella afzelii (strain PKo) (Borrelia afzelii).